The chain runs to 327 residues: HTH-type transcriptional regulator EbgR (327 aa).

The HTH lacI-type domain occupies 1–57; sequence MATLKDIAIEAGVSLATVSRVLNDDPTLNVKEETKHRILEIAEKLEYKTSSARKLQT. The H-T-H motif DNA-binding region spans 4 to 23; it reads LKDIAIEAGVSLATVSRVLN.

Repressor for beta galactosidase alpha and beta subunits (ebgA and ebgC). Binds lactose as an inducer. This chain is HTH-type transcriptional regulator EbgR (ebgR), found in Escherichia coli (strain K12).